The sequence spans 425 residues: Dihydroorotase (425 aa).

Zn(2+) contacts are provided by His-61 and His-63. Substrate-binding positions include 63 to 65 (HLR) and Asn-95. 4 residues coordinate Zn(2+): Lys-146, His-175, His-224, and Asp-293. Lys-146 bears the N6-carboxylysine mark. Asp-293 is a catalytic residue. Residues His-297 and 311–312 (PG) contribute to the substrate site.

Belongs to the metallo-dependent hydrolases superfamily. DHOase family. Class I DHOase subfamily. Requires Zn(2+) as cofactor.

The catalysed reaction is (S)-dihydroorotate + H2O = N-carbamoyl-L-aspartate + H(+). It functions in the pathway pyrimidine metabolism; UMP biosynthesis via de novo pathway; (S)-dihydroorotate from bicarbonate: step 3/3. In terms of biological role, catalyzes the reversible cyclization of carbamoyl aspartate to dihydroorotate. This is Dihydroorotase from Aeropyrum pernix (strain ATCC 700893 / DSM 11879 / JCM 9820 / NBRC 100138 / K1).